Here is a 49-residue protein sequence, read N- to C-terminus: Large ribosomal subunit protein bL33 (49 aa).

Belongs to the bacterial ribosomal protein bL33 family.

The chain is Large ribosomal subunit protein bL33 from Streptococcus pyogenes serotype M18 (strain MGAS8232).